A 253-amino-acid polypeptide reads, in one-letter code: Large ribosomal subunit protein mL57 (253 aa).

Residues 1–28 (MENSMMFISRSLRRPVTALNCNLQSVRT) constitute a mitochondrion transit peptide.

It belongs to the ribonuclease III family. Mitochondrion-specific ribosomal protein mL57 subfamily. In terms of assembly, component of the mitochondrial large ribosomal subunit (mt-LSU). Mature yeast 74S mitochondrial ribosomes consist of a small (37S) and a large (54S) subunit. The 37S small subunit contains a 15S ribosomal RNA (15S mt-rRNA) and 34 different proteins. The 54S large subunit contains a 21S rRNA (21S mt-rRNA) and 46 different proteins. mL57 forms a heterodimer with mL44 and stabilizes rRNA expansion segments 1/2 at a membrane-facing protuberance close to the point of attachment of the ribosome to the translocon in the membrane.

Its subcellular location is the mitochondrion. Functionally, component of the mitochondrial ribosome (mitoribosome), a dedicated translation machinery responsible for the synthesis of mitochondrial genome-encoded proteins, including at least some of the essential transmembrane subunits of the mitochondrial respiratory chain. The mitoribosomes are attached to the mitochondrial inner membrane and translation products are cotranslationally integrated into the membrane. This chain is Large ribosomal subunit protein mL57 (MRPL15), found in Saccharomyces cerevisiae (strain ATCC 204508 / S288c) (Baker's yeast).